Consider the following 348-residue polypeptide: Cylicin-2 (348 aa).

The tract at residues 25–347 (KKSWNQQHFA…DEKKDAKKKG (323 aa)) is 31 X 3 AA repeats of K-K-X. 2 disordered regions span residues 35 to 59 (LLFPKPQRPGTKRRSKPSQIRDNTV) and 101 to 348 (PTRT…KKGK). Composition is skewed to basic and acidic residues over residues 103–159 (RTVE…DAKK), 166–217 (KDAE…EKDS), 238–267 (KADEKKDEDGKKDANKGDESKDAKKDAKEI), and 276–342 (KPSS…EKKD). 3 tandem repeats follow at residues 157–184 (AKKDSKKGKKDAEKGKDSATESEDEKGG), 185–212 (AKKDNKKDKKDSNKGKDSATESEGEKGG), and 213–240 (TEKDSKKGKKDSKKGKDSAIELQAVKAD). A 3 X approximate tandem repeats region spans residues 157 to 240 (AKKDSKKGKK…AIELQAVKAD (84 aa)).

Testis.

The protein localises to the cytoplasm. Its subcellular location is the cytoskeleton. It localises to the perinuclear theca. The protein resides in the calyx. Plays a role in the establishment of normal sperm morphology during spermatogenesis. It is required for acrosome attachment to the nuclear envelope, and proper manchette elongation and disassembly. The chain is Cylicin-2 (CYLC2) from Homo sapiens (Human).